A 538-amino-acid polypeptide reads, in one-letter code: Phosphoenolpyruvate carboxykinase (ATP) (538 aa).

Residues Arg-61, Tyr-195, and Lys-201 each coordinate substrate. ATP is bound by residues Lys-201, His-220, and 236–244 (GLSGTGKTT). Mn(2+)-binding residues include Lys-201 and His-220. Asp-257 contributes to the Mn(2+) binding site. ATP-binding residues include Glu-285, Arg-323, and Thr-449. Substrate is bound at residue Arg-323.

Belongs to the phosphoenolpyruvate carboxykinase (ATP) family. Mn(2+) serves as cofactor.

The protein resides in the cytoplasm. It catalyses the reaction oxaloacetate + ATP = phosphoenolpyruvate + ADP + CO2. It participates in carbohydrate biosynthesis; gluconeogenesis. Functionally, involved in the gluconeogenesis. Catalyzes the conversion of oxaloacetate (OAA) to phosphoenolpyruvate (PEP) through direct phosphoryl transfer between the nucleoside triphosphate and OAA. This chain is Phosphoenolpyruvate carboxykinase (ATP), found in Afipia carboxidovorans (strain ATCC 49405 / DSM 1227 / KCTC 32145 / OM5) (Oligotropha carboxidovorans).